Reading from the N-terminus, the 199-residue chain is Recombination protein RecR (199 aa).

The C4-type zinc-finger motif lies at 57–72 (CQSCRTYTEETLCPIC). A Toprim domain is found at 81–176 (STICVVETPA…MISRIAHGVP (96 aa)).

The protein belongs to the RecR family.

In terms of biological role, may play a role in DNA repair. It seems to be involved in an RecBC-independent recombinational process of DNA repair. It may act with RecF and RecO. This chain is Recombination protein RecR, found in Shewanella baltica (strain OS155 / ATCC BAA-1091).